The following is a 245-amino-acid chain: Endo-chitosanase (245 aa).

The first 17 residues, 1–17 (MHFAGIVAIALATGATA), serve as a signal peptide directing secretion.

The protein belongs to the glycosyl hydrolase 75 family.

The protein localises to the secreted. It catalyses the reaction Endohydrolysis of beta-(1-&gt;4)-linkages between D-glucosamine residues in a partly acetylated chitosan.. Chitosanase catalyzing the endo-type cleavage of chitosan, the deacylated form of chitin. Chitosanase may be crucial in the degradation of the deacetylated portion of chitin in the fungal cell wall. Chitoolisaccharides produced by the hydrolysis of partially N-acetylated chitosan are known to have many biological activities, including antibacterial activity, immune-enhancing effects, and elicitor activity. The protein is Endo-chitosanase (csn) of Aspergillus oryzae (strain ATCC 42149 / RIB 40) (Yellow koji mold).